Here is a 260-residue protein sequence, read N- to C-terminus: Capsid protein (260 aa).

Residues 3 to 20 (KRPGDIIISTPVSKVRRR) carry the Bipartite nuclear localization signal motif. The Nuclear localization signal motif lies at 41–55 (KRRSWTYRPMYRKPR). The segment at 69-86 (CEGPCKVQSYEQRDDIKH) is a zinc-finger region. The short motif at 102–123 (ITHRVGKRFCVKSIYFLGKVWM) is the Nuclear export signal element. The short motif at 202 to 251 (KRFFKINSHVTLFIFIQEAAKYENHTENALLLYMACTHASNPVYATMKIR) is the Bipartite nuclear localization signal element.

The protein belongs to the geminiviridae capsid protein family. In terms of assembly, homomultimer. Binds to single-stranded and double-stranded viral DNA. Interacts (via nuclear localization signals) with host importin alpha-1a.

It is found in the virion. The protein localises to the host nucleus. Its function is as follows. Encapsidates the viral genome into characteristic twinned ('geminate') particles. Binds the genomic viral ssDNA and shuttles it into and out of the cell nucleus. Plays a role in protection of the genome from degradation, virus acquisition and transmission by insect vectors, infectivity, and systemic movement. The CP of monopartite geminiviruses is absolutely essential for virus movement. The sequence is that of Capsid protein from Cynanchum acutum (Little mallow).